Consider the following 192-residue polypeptide: Ion-translocating oxidoreductase complex subunit A (192 aa).

Helical transmembrane passes span 5–25 (LLLL…FLGL), 39–59 (IGMS…SYLV), 65–85 (LPFE…AVVV), 102–122 (ALGI…VALL), 134–154 (AIYG…FSAM), and 171–191 (AIAM…TGLV).

It belongs to the NqrDE/RnfAE family. As to quaternary structure, the complex is composed of six subunits: RnfA, RnfB, RnfC, RnfD, RnfE and RnfG.

The protein resides in the cell inner membrane. In terms of biological role, part of a membrane-bound complex that couples electron transfer with translocation of ions across the membrane. The protein is Ion-translocating oxidoreductase complex subunit A of Shewanella sediminis (strain HAW-EB3).